A 520-amino-acid polypeptide reads, in one-letter code: Alkyl hydroperoxide reductase subunit F (520 aa).

An FAD-binding site is contributed by 213-228 (DVLVVGGGPAGAAAAI). An intrachain disulfide couples C343 to C346. Position 355–369 (355–369 (RVAVIGGGNSGVEAA)) interacts with NAD(+). 476-486 (TSIPGVFAAGD) serves as a coordination point for FAD.

The protein belongs to the class-II pyridine nucleotide-disulfide oxidoreductase family. Homodimer. It depends on FAD as a cofactor.

Serves to protect the cell against DNA damage by alkyl hydroperoxides. It can use either NADH or NADPH as electron donor for direct reduction of redox dyes or of alkyl hydroperoxides when combined with the AhpC protein. This chain is Alkyl hydroperoxide reductase subunit F (ahpF), found in Pseudomonas putida (Arthrobacter siderocapsulatus).